The following is a 481-amino-acid chain: OTU domain-containing protein 1 (481 aa).

Disordered stretches follow at residues 18 to 60 and 202 to 282; these read PTAA…AAAE and LAAA…IVSR. The span at 38-58 shows a compositional bias: low complexity; sequence PPGAAGAAPEPETGECQPAAA. The span at 225 to 257 shows a compositional bias: basic and acidic residues; that stretch reads GEEHLAERGPRGWERGGDRCDAPGGDAARRPDP. Residues 261–281 are compositionally biased toward low complexity; that stretch reads APPAGSIEAAPSSAAEPVIVS. The OTU domain occupies 309 to 438; it reads KYRFHIIPDG…NGHYDAVFDH (130 aa). Residues 314–320 form a cys-loop region; it reads IIPDGNC. D317 is an active-site residue. C320 acts as the Nucleophile in catalysis. A his-loop region spans residues 369–379; it reads AAQDGAWAGYP. The variable-loop stretch occupies residues 426–431; it reads WLSNGH. The active site involves H431. Residues 457–476 form the UIM domain; the sequence is KRDEELAKSMAISLSKMYIE.

It carries out the reaction Thiol-dependent hydrolysis of ester, thioester, amide, peptide and isopeptide bonds formed by the C-terminal Gly of ubiquitin (a 76-residue protein attached to proteins as an intracellular targeting signal).. Its function is as follows. Deubiquitinating enzyme that specifically hydrolyzes 'Lys-63'-linked polyubiquitin to monoubiquitin. Required for the stability and translation of a subset mRNAs with a high abundance of rare codons by mediating deubiquitination of 40S ribosomal protein RPS10/eS10, thereby antagonizing ZNF598-mediated 40S ubiquitination. The abundance of rare codons in mRNAs can limit the translation rate and can lead to ribosome collisions that trigger activation of ribosome quality control (RQC) pathway by ZNF598. OTUD1-mediated deubiquitination prevents activation of the RQC and subsequent dissociation of ribosomes and stimulates formation of polysomes and translation. This Homo sapiens (Human) protein is OTU domain-containing protein 1.